Here is a 440-residue protein sequence, read N- to C-terminus: Adenylyltransferase and sulfurtransferase UBA4 (440 aa).

Met1 bears the N-acetylmethionine mark. ATP is bound by residues Gly77, Asp98, 105–109, Lys122, and 166–167; these read SNLHR and DS. Residues Cys208 and Cys211 each contribute to the Zn(2+) site. Cys225 acts as the Glycyl thioester intermediate; for adenylyltransferase activity in catalysis. Positions 286 and 289 each coordinate Zn(2+). Position 326 is a phosphoserine (Ser326). One can recognise a Rhodanese domain in the interval 339 to 438; that stretch reads FLAKHIFLDV…YIDDIDQTIP (100 aa). The active-site Cysteine persulfide intermediate; for sulfurtransferase activity is Cys397.

The protein in the N-terminal section; belongs to the HesA/MoeB/ThiF family. UBA4 subfamily. Zn(2+) serves as cofactor.

The protein resides in the cytoplasm. It localises to the cytosol. The protein operates within tRNA modification; 5-methoxycarbonylmethyl-2-thiouridine-tRNA biosynthesis. Functionally, plays a central role in 2-thiolation of mcm(5)S(2)U at tRNA wobble positions of cytosolic tRNA(Lys), tRNA(Glu) and tRNA(Gln). Acts by mediating the C-terminal thiocarboxylation of sulfur carrier URM1. Its N-terminus first activates URM1 as acyl-adenylate (-COAMP), then the persulfide sulfur on the catalytic cysteine is transferred to URM1 to form thiocarboxylation (-COSH) of its C-terminus. The reaction probably involves hydrogen sulfide that is generated from the persulfide intermediate and that acts as a nucleophile towards URM1. Subsequently, a transient disulfide bond is formed. Does not use thiosulfate as sulfur donor; NFS1 probably acting as a sulfur donor for thiocarboxylation reactions. Prior mcm(5) tRNA modification by the elongator complex is required for 2-thiolation. May also be involved in protein urmylation. The protein is Adenylyltransferase and sulfurtransferase UBA4 of Saccharomyces cerevisiae (strain RM11-1a) (Baker's yeast).